The primary structure comprises 219 residues: Phosphate-specific transport system accessory protein PhoU homolog 1 (219 aa).

The protein belongs to the PhoU family. In terms of assembly, homodimer.

The protein localises to the cytoplasm. Plays a role in the regulation of phosphate uptake. The protein is Phosphate-specific transport system accessory protein PhoU homolog 1 of Methanothermobacter thermautotrophicus (strain ATCC 29096 / DSM 1053 / JCM 10044 / NBRC 100330 / Delta H) (Methanobacterium thermoautotrophicum).